Reading from the N-terminus, the 431-residue chain is Adenylosuccinate synthetase (431 aa).

GTP is bound by residues glycine 12 to lysine 18 and glycine 40 to threonine 42. The active-site Proton acceptor is the aspartate 13. Positions 13 and 40 each coordinate Mg(2+). IMP-binding positions include aspartate 13–lysine 16, asparagine 38–histidine 41, threonine 129, arginine 143, glutamine 224, threonine 239, and arginine 303. Residue histidine 41 is the Proton donor of the active site. Threonine 299 to arginine 305 is a substrate binding site. GTP is bound by residues arginine 305, lysine 331 to aspartate 333, and serine 413 to glycine 415.

This sequence belongs to the adenylosuccinate synthetase family. Homodimer. Requires Mg(2+) as cofactor.

It localises to the cytoplasm. The enzyme catalyses IMP + L-aspartate + GTP = N(6)-(1,2-dicarboxyethyl)-AMP + GDP + phosphate + 2 H(+). It functions in the pathway purine metabolism; AMP biosynthesis via de novo pathway; AMP from IMP: step 1/2. Functionally, plays an important role in the de novo pathway of purine nucleotide biosynthesis. Catalyzes the first committed step in the biosynthesis of AMP from IMP. The protein is Adenylosuccinate synthetase of Ehrlichia canis (strain Jake).